The sequence spans 200 residues: MASKIETLKANLEAALGARAVSLVEAVGELTLVVKASDYLEVAKQLRDDRSLGFEQLIDLCGIDYQTYGDGAYDGPRFAAVLHLLSVANNWRLRVRVFAPDDDLPIVPSVVDIWNSANWYEREAFDLYGIVFEGHPDLRRILTDYGFIGHPFRKDFPVSGYVEMRYDPEEKRVVYQPVTIEPREITPRVIREDRYGGLKH.

The protein belongs to the complex I 30 kDa subunit family. In terms of assembly, NDH-1 is composed of 14 different subunits. Subunits NuoB, C, D, E, F, and G constitute the peripheral sector of the complex.

It localises to the cell inner membrane. It carries out the reaction a quinone + NADH + 5 H(+)(in) = a quinol + NAD(+) + 4 H(+)(out). Its function is as follows. NDH-1 shuttles electrons from NADH, via FMN and iron-sulfur (Fe-S) centers, to quinones in the respiratory chain. The immediate electron acceptor for the enzyme in this species is believed to be ubiquinone. Couples the redox reaction to proton translocation (for every two electrons transferred, four hydrogen ions are translocated across the cytoplasmic membrane), and thus conserves the redox energy in a proton gradient. This is NADH-quinone oxidoreductase subunit C from Burkholderia thailandensis (strain ATCC 700388 / DSM 13276 / CCUG 48851 / CIP 106301 / E264).